The sequence spans 373 residues: Cell division protein FtsZ 1 (373 aa).

GTP is bound by residues glycine 51 to asparagine 55, glycine 138 to glycine 140, glutamate 169, arginine 173, and aspartate 216. The tract at residues glutamate 354–leucine 373 is disordered. Over residues glutamate 360–leucine 373 the composition is skewed to basic and acidic residues.

The protein belongs to the FtsZ family. In terms of assembly, homodimer. Polymerizes to form a dynamic ring structure in a strictly GTP-dependent manner. Interacts directly with several other division proteins.

The protein resides in the cytoplasm. Functionally, essential cell division protein that forms a contractile ring structure (Z ring) at the future cell division site. The regulation of the ring assembly controls the timing and the location of cell division. One of the functions of the FtsZ ring is to recruit other cell division proteins to the septum to produce a new cell wall between the dividing cells. Binds GTP and shows GTPase activity. This chain is Cell division protein FtsZ 1, found in Thermococcus kodakarensis (strain ATCC BAA-918 / JCM 12380 / KOD1) (Pyrococcus kodakaraensis (strain KOD1)).